A 584-amino-acid chain; its full sequence is Aspartate--tRNA(Asp/Asn) ligase (584 aa).

Position 177 (Glu177) interacts with L-aspartate. Residues 201–204 (QLFK) are aspartate. Arg223 contacts L-aspartate. ATP-binding positions include 223 to 225 (RDE) and Gln232. His447 contacts L-aspartate. Glu481 contributes to the ATP binding site. Arg488 lines the L-aspartate pocket. 533–536 (GLDR) contacts ATP.

It belongs to the class-II aminoacyl-tRNA synthetase family. Type 1 subfamily. Homodimer.

It is found in the cytoplasm. The catalysed reaction is tRNA(Asx) + L-aspartate + ATP = L-aspartyl-tRNA(Asx) + AMP + diphosphate. Functionally, aspartyl-tRNA synthetase with relaxed tRNA specificity since it is able to aspartylate not only its cognate tRNA(Asp) but also tRNA(Asn). Reaction proceeds in two steps: L-aspartate is first activated by ATP to form Asp-AMP and then transferred to the acceptor end of tRNA(Asp/Asn). The sequence is that of Aspartate--tRNA(Asp/Asn) ligase from Chlamydia abortus (strain DSM 27085 / S26/3) (Chlamydophila abortus).